Reading from the N-terminus, the 377-residue chain is Spermidine/putrescine import ATP-binding protein PotA (377 aa).

Residues 18 to 248 (IRLSGISKSF…PKNLFVARFI (231 aa)) enclose the ABC transporter domain. 50–57 (GPSGCGKT) contacts ATP.

This sequence belongs to the ABC transporter superfamily. Spermidine/putrescine importer (TC 3.A.1.11.1) family. In terms of assembly, the complex is composed of two ATP-binding proteins (PotA), two transmembrane proteins (PotB and PotC) and a solute-binding protein (PotD).

It localises to the cell inner membrane. It catalyses the reaction ATP + H2O + polyamine-[polyamine-binding protein]Side 1 = ADP + phosphate + polyamineSide 2 + [polyamine-binding protein]Side 1.. In terms of biological role, part of the ABC transporter complex PotABCD involved in spermidine/putrescine import. Responsible for energy coupling to the transport system. This is Spermidine/putrescine import ATP-binding protein PotA from Vibrio parahaemolyticus serotype O3:K6 (strain RIMD 2210633).